Reading from the N-terminus, the 453-residue chain is Protein ECM18 (453 aa).

The AB hydrolase-1 domain occupies 130-435 (LLIHGYAASS…SGHNLFLDNP (306 aa)). The HXXXXD motif signature appears at 428 to 433 (HNLFLD).

Belongs to the peptidase S33 family. ABHD4/ABHD5 subfamily.

It localises to the mitochondrion. Functionally, may be involved in cell wall organization and biogenesis. This is Protein ECM18 (ECM18) from Saccharomyces cerevisiae (strain ATCC 204508 / S288c) (Baker's yeast).